A 115-amino-acid polypeptide reads, in one-letter code: Large ribosomal subunit protein bL20c (115 aa).

The protein belongs to the bacterial ribosomal protein bL20 family.

The protein resides in the plastid. It is found in the chloroplast. Functionally, binds directly to 23S ribosomal RNA and is necessary for the in vitro assembly process of the 50S ribosomal subunit. It is not involved in the protein synthesizing functions of that subunit. This chain is Large ribosomal subunit protein bL20c, found in Chaetosphaeridium globosum (Charophycean green alga).